The primary structure comprises 621 residues: tRNA 5-methylaminomethyl-2-thiouridine biosynthesis bifunctional protein MnmC (621 aa).

Residues 1 to 222 (MKNANLSFKG…KRQMSSAVLE (222 aa)) form a tRNA (mnm(5)s(2)U34)-methyltransferase region. The FAD-dependent cmnm(5)s(2)U34 oxidoreductase stretch occupies residues 250 to 621 (IGTGVAGLAT…LIRKLKKGLK (372 aa)).

This sequence in the N-terminal section; belongs to the methyltransferase superfamily. tRNA (mnm(5)s(2)U34)-methyltransferase family. The protein in the C-terminal section; belongs to the DAO family. FAD is required as a cofactor.

The protein resides in the cytoplasm. It carries out the reaction 5-aminomethyl-2-thiouridine(34) in tRNA + S-adenosyl-L-methionine = 5-methylaminomethyl-2-thiouridine(34) in tRNA + S-adenosyl-L-homocysteine + H(+). In terms of biological role, catalyzes the last two steps in the biosynthesis of 5-methylaminomethyl-2-thiouridine (mnm(5)s(2)U) at the wobble position (U34) in tRNA. Catalyzes the FAD-dependent demodification of cmnm(5)s(2)U34 to nm(5)s(2)U34, followed by the transfer of a methyl group from S-adenosyl-L-methionine to nm(5)s(2)U34, to form mnm(5)s(2)U34. The chain is tRNA 5-methylaminomethyl-2-thiouridine biosynthesis bifunctional protein MnmC from Campylobacter concisus (strain 13826).